We begin with the raw amino-acid sequence, 197 residues long: Nucleoside triphosphate pyrophosphatase (197 aa).

Aspartate 71 (proton acceptor) is an active-site residue.

The protein belongs to the Maf family. A divalent metal cation serves as cofactor.

It is found in the cytoplasm. The catalysed reaction is a ribonucleoside 5'-triphosphate + H2O = a ribonucleoside 5'-phosphate + diphosphate + H(+). It carries out the reaction a 2'-deoxyribonucleoside 5'-triphosphate + H2O = a 2'-deoxyribonucleoside 5'-phosphate + diphosphate + H(+). In terms of biological role, nucleoside triphosphate pyrophosphatase. May have a dual role in cell division arrest and in preventing the incorporation of modified nucleotides into cellular nucleic acids. This chain is Nucleoside triphosphate pyrophosphatase, found in Synechococcus sp. (strain JA-2-3B'a(2-13)) (Cyanobacteria bacterium Yellowstone B-Prime).